A 544-amino-acid chain; its full sequence is Histone-arginine methyltransferase CARMER (544 aa).

In terms of domain architecture, SAM-dependent MTase PRMT-type spans 150 to 459 (ASQYFQFYGY…QSYDVTIDLH (310 aa)). Residues Gln-163, Arg-172, Gly-196, Glu-218, Glu-247, and Thr-275 each coordinate S-adenosyl-L-methionine. Residues 505–520 (DTQQQQQGSRNSNSML) are compositionally biased toward polar residues. The disordered stretch occupies residues 505 to 527 (DTQQQQQGSRNSNSMLNGGLSVN). Residue Arg-514 is modified to Asymmetric dimethylarginine; by autocatalysis.

It belongs to the class I-like SAM-binding methyltransferase superfamily. Protein arginine N-methyltransferase family. In terms of assembly, homodimer. In terms of processing, the dimethylated protein is the major form.

Its subcellular location is the cytoplasm. It is found in the nucleus. The catalysed reaction is L-arginyl-[protein] + 2 S-adenosyl-L-methionine = N(omega),N(omega)-dimethyl-L-arginyl-[protein] + 2 S-adenosyl-L-homocysteine + 2 H(+). In terms of biological role, methylates (mono- and asymmetric dimethylation) the guanidino nitrogens of arginyl residues in proteins. May methylate histone H3 at 'Arg-17' and activate transcription via chromatin remodeling. In Drosophila grimshawi (Hawaiian fruit fly), this protein is Histone-arginine methyltransferase CARMER (Art4).